We begin with the raw amino-acid sequence, 152 residues long: Sec-independent protein translocase protein TatB (152 aa).

A helical membrane pass occupies residues 1 to 21 (MFDLGWSELLVIGVVALIVVG).

It belongs to the TatB family. The Tat system comprises two distinct complexes: a TatABC complex, containing multiple copies of TatA, TatB and TatC subunits, and a separate TatA complex, containing only TatA subunits. Substrates initially bind to the TatABC complex, which probably triggers association of the separate TatA complex to form the active translocon.

It is found in the cell inner membrane. Its function is as follows. Part of the twin-arginine translocation (Tat) system that transports large folded proteins containing a characteristic twin-arginine motif in their signal peptide across membranes. Together with TatC, TatB is part of a receptor directly interacting with Tat signal peptides. TatB may form an oligomeric binding site that transiently accommodates folded Tat precursor proteins before their translocation. This chain is Sec-independent protein translocase protein TatB, found in Ruegeria pomeroyi (strain ATCC 700808 / DSM 15171 / DSS-3) (Silicibacter pomeroyi).